We begin with the raw amino-acid sequence, 354 residues long: Polyribonucleotide 5'-hydroxyl-kinase PYRAB01840 (354 aa).

36-43 (GDVDTGKT) is an ATP binding site.

A divalent metal cation serves as cofactor.

The catalysed reaction is a 5'-end dephospho-2'-deoxyribonucleoside-DNA + ATP = a 5'-end 5'-phospho-2'-deoxyribonucleoside-DNA + ADP + H(+). It carries out the reaction a 5'-end dephospho-ribonucleoside-RNA + ATP = a 5'-end 5'-phospho-ribonucleoside-RNA + ADP + H(+). Its function is as follows. Polynucleotide kinase that can phosphorylate the 5'-hydroxyl groups of both single-stranded RNA (ssRNA) and single-stranded DNA (ssDNA). Exhibits a strong preference for ssRNA. The chain is Polyribonucleotide 5'-hydroxyl-kinase PYRAB01840 from Pyrococcus abyssi (strain GE5 / Orsay).